A 172-amino-acid polypeptide reads, in one-letter code: Crossover junction endodeoxyribonuclease RuvC (172 aa).

Active-site residues include D8, E67, and D139. Residues D8, E67, and D139 each contribute to the Mg(2+) site.

This sequence belongs to the RuvC family. As to quaternary structure, homodimer which binds Holliday junction (HJ) DNA. The HJ becomes 2-fold symmetrical on binding to RuvC with unstacked arms; it has a different conformation from HJ DNA in complex with RuvA. In the full resolvosome a probable DNA-RuvA(4)-RuvB(12)-RuvC(2) complex forms which resolves the HJ. Mg(2+) is required as a cofactor.

Its subcellular location is the cytoplasm. The catalysed reaction is Endonucleolytic cleavage at a junction such as a reciprocal single-stranded crossover between two homologous DNA duplexes (Holliday junction).. Its function is as follows. The RuvA-RuvB-RuvC complex processes Holliday junction (HJ) DNA during genetic recombination and DNA repair. Endonuclease that resolves HJ intermediates. Cleaves cruciform DNA by making single-stranded nicks across the HJ at symmetrical positions within the homologous arms, yielding a 5'-phosphate and a 3'-hydroxyl group; requires a central core of homology in the junction. The consensus cleavage sequence is 5'-(A/T)TT(C/G)-3'. Cleavage occurs on the 3'-side of the TT dinucleotide at the point of strand exchange. HJ branch migration catalyzed by RuvA-RuvB allows RuvC to scan DNA until it finds its consensus sequence, where it cleaves and resolves the cruciform DNA. In Hahella chejuensis (strain KCTC 2396), this protein is Crossover junction endodeoxyribonuclease RuvC.